Reading from the N-terminus, the 166-residue chain is Signal peptidase complex catalytic subunit SEC11 (166 aa).

Topologically, residues 1–9 are cytoplasmic; that stretch reads MNIRQQLTQ. A helical; Signal-anchor for type II membrane protein transmembrane segment spans residues 10–30; that stretch reads LLTLGYVFASAFMLWKTLSVV. Over 31–166 the chain is Lumenal; it reads ANLHSPIVVV…LGLSSLFSNE (136 aa). Residues Ser44, His83, and Asp108 each act as charge relay system in the active site. The C-terminal short (CTS) helix stretch occupies residues 152–163; it reads GLLGLLGLSSLF.

Belongs to the peptidase S26B family. In terms of assembly, component of the signal peptidase complex (SPC) composed of a catalytic subunit SEC11 and three accessory subunits SPC1, SPC2 and SPC3. The complex induces a local thinning of the ER membrane which is used to measure the length of the signal peptide (SP) h-region of protein substrates. This ensures the selectivity of the complex towards h-regions shorter than 18-20 amino acids. SPC associates with the translocon complex.

The protein localises to the endoplasmic reticulum membrane. The enzyme catalyses Cleavage of hydrophobic, N-terminal signal or leader sequences from secreted and periplasmic proteins.. In terms of biological role, catalytic component of the signal peptidase complex (SPC) which catalyzes the cleavage of N-terminal signal sequences from nascent proteins as they are translocated into the lumen of the endoplasmic reticulum. Specifically cleaves N-terminal signal peptides that contain a hydrophobic alpha-helix (h-region) shorter than 18-20 amino acids. In Lodderomyces elongisporus (strain ATCC 11503 / CBS 2605 / JCM 1781 / NBRC 1676 / NRRL YB-4239) (Yeast), this protein is Signal peptidase complex catalytic subunit SEC11 (SEC11).